A 960-amino-acid polypeptide reads, in one-letter code: Phosphoenolpyruvate carboxylase 3 (960 aa).

A Phosphoserine modification is found at Ser-8. Catalysis depends on residues His-167 and Lys-597.

Belongs to the PEPCase type 1 family. Homotetramer. The cofactor is Mg(2+).

It is found in the cytoplasm. The enzyme catalyses oxaloacetate + phosphate = phosphoenolpyruvate + hydrogencarbonate. It participates in photosynthesis; C4 acid pathway. Its activity is regulated as follows. By light-reversible phosphorylation. In terms of biological role, through the carboxylation of phosphoenolpyruvate (PEP) it forms oxaloacetate, a four-carbon dicarboxylic acid source for the tricarboxylic acid cycle. This Sorghum bicolor (Sorghum) protein is Phosphoenolpyruvate carboxylase 3.